We begin with the raw amino-acid sequence, 88 residues long: MGFTDETVRFNLNDGDKDEISNTLTNVYRSLAEKGYNPINQIVGYVLSGDPAYVPRYNDARNQIRKYERDEIVEELVRYYLKGNGTDL.

Belongs to the UPF0297 family.

The sequence is that of UPF0297 protein str1959 from Streptococcus thermophilus (strain CNRZ 1066).